The chain runs to 568 residues: Phosphoprotein (568 aa).

Positions 1–23 (MDQDALISKEDSEVEREASGGRE) are disordered. The segment covering 7–20 (ISKEDSEVEREASG) has biased composition (basic and acidic residues). An N0 binding region spans residues 33 to 41 (DAVLSSEPT). The interval 54 to 317 (INTLQRPGST…SPETDATKKG (264 aa)) is disordered. 3 stretches are compositionally biased toward basic and acidic residues: residues 99–110 (AEAHARNVDKQN), 150–168 (GAEDENREMAANPDKRGED), and 175–193 (EEIRRSAPLPDEREGRADN). Phosphoserine; by host occurs at positions 249, 257, and 260. Residues 344-411 (FESSRDASYV…SFRDIYKRFS (68 aa)) are multimerization. Positions 364–429 (YAEMAFNVCG…LLMSNLSTLH (66 aa)) form a coiled coil. Positions 412–445 (EYQKEQNSLLMSNLSTLHIITDRGGKTDNPDSPT) are l protein binding. The disordered stretch occupies residues 433–462 (DRGGKTDNPDSPTRSPSVFAKTKENKTKAT). Residues Ser-447 and Ser-449 each carry the phosphoserine; by host modification. The segment covering 453 to 462 (KTKENKTKAT) has biased composition (basic and acidic residues). Residues 479–568 (DLLREDEFRE…VEEDIESLTN (90 aa)) are interaction with the nucleocapsid (N-RNA).

The protein belongs to the respirovirus P protein family. In terms of assembly, homotetramer. Interacts (via multimerization domain) with polymerase L; this interaction forms the polymerase complex. Interacts (via N-terminus) with N0; this interaction allows P to chaperon N0 before encapsidation and form the N-P complex. Interacts (via C-terminus) with N-RNA template; this interaction positions the polymerase on the template. Phosphorylated by PKC/PRKCZ, and other unknown kinases. Phosphorylation is necessary for viral transcription and replication. The N-terminus contains the majority of phosphorylated sites. Ser-249 is the major site of phosphorylation, but is not necessary for most functions.

The protein localises to the host cytoplasm. Functionally, essential cofactor of the RNA polymerase L that plays a central role in the transcription and replication by forming the polymerase complex with RNA polymerase L and recruiting L to the genomic N-RNA template for RNA synthesis. Also plays a central role in the encapsidation of nascent RNA chains by forming the encapsidation complex with the nucleocapsid protein N (N-P complex). Acts as a chaperone for newly synthesized free N protein, so-called N0, allowing encapsidation of nascent RNA chains during replication. The nucleoprotein protein N prevents excessive phosphorylation of P, which leads to down-regulation of viral transcription/ replication. Participates, together with N, in the formation of viral factories (viroplasms), which are large inclusions in the host cytoplasm where replication takes place. Recruits host PI4KB and remodel the host endoplasmic reticulum membrane to form viral replication factories. The polypeptide is Phosphoprotein (P/V/C) (Sendai virus (strain Ohita) (SeV)).